Here is a 673-residue protein sequence, read N- to C-terminus: Xaa-Pro aminopeptidase 2 (673 aa).

An N-terminal signal peptide occupies residues 1 to 21 (MAQACWGCYPWLVLICACAWG). 3 N-linked (GlcNAc...) asparagine glycosylation sites follow: Asn34, Asn48, and Asn64. Arg115 serves as a coordination point for substrate. N-linked (GlcNAc...) asparagine glycans are attached at residues Asn277, Asn290, and Asn294. Substrate is bound at residue His429. Mn(2+) is bound at residue Asp449. 3 residues coordinate Zn(2+): Asp449, Asp460, and His523. The substrate site is built by His523, His532, and Glu554. Zn(2+) contacts are provided by Glu554 and Glu568. Ala649 carries the GPI-anchor amidated alanine lipid modification. The propeptide at 650–673 (RAAPTTSLGSLMTVSALAILGWSV) is removed in mature form.

This sequence belongs to the peptidase M24B family. Homotrimer. Zn(2+) is required as a cofactor. N-glycosylated. Kidney.

Its subcellular location is the cell membrane. The enzyme catalyses Release of any N-terminal amino acid, including proline, that is linked to proline, even from a dipeptide or tripeptide.. With respect to regulation, inhibited by apstatin and the metal ion chelator EDTA. Potently inhibited by the converting enzyme inhibitors cilazaprilat; enalaprilat; L155,212; ramiprilat and YS 980. Also inhibited to a lesser extent by indolaprilat; quinaprilat; spiraprilat; captopril and zofenoprilat. Functionally, membrane-bound metalloprotease which catalyzes the removal of a penultimate prolyl residue from the N-termini of peptides, such as Arg-Pro-Pro. May play a role in the metabolism of the vasodilator bradykinin. In Sus scrofa (Pig), this protein is Xaa-Pro aminopeptidase 2 (XPNPEP2).